Reading from the N-terminus, the 553-residue chain is CTP synthase (553 aa).

The segment at 1–270 is amidoligase domain; that stretch reads MTKYVFVTGG…DRLICEELRL (270 aa). Residue S13 participates in CTP binding. S13 contacts UTP. Residues 14–19 and D71 each bind ATP; that span reads SLGKGI. D71 and E144 together coordinate Mg(2+). CTP-binding positions include 151 to 153, 191 to 196, and K227; these read DIE and KTKPTQ. Residues 191–196 and K227 contribute to the UTP site; that span reads KTKPTQ. The Glutamine amidotransferase type-1 domain occupies 295 to 547; the sequence is TIGMVGKYVD…VQAALACQQT (253 aa). G356 is a binding site for L-glutamine. The active-site Nucleophile; for glutamine hydrolysis is the C383. Residues 384-387, E407, and R473 contribute to the L-glutamine site; that span reads LGMQ. Residues H520 and E522 contribute to the active site.

This sequence belongs to the CTP synthase family. Homotetramer.

The enzyme catalyses UTP + L-glutamine + ATP + H2O = CTP + L-glutamate + ADP + phosphate + 2 H(+). The catalysed reaction is L-glutamine + H2O = L-glutamate + NH4(+). It catalyses the reaction UTP + NH4(+) + ATP = CTP + ADP + phosphate + 2 H(+). The protein operates within pyrimidine metabolism; CTP biosynthesis via de novo pathway; CTP from UDP: step 2/2. Its activity is regulated as follows. Allosterically activated by GTP, when glutamine is the substrate; GTP has no effect on the reaction when ammonia is the substrate. The allosteric effector GTP functions by stabilizing the protein conformation that binds the tetrahedral intermediate(s) formed during glutamine hydrolysis. Inhibited by the product CTP, via allosteric rather than competitive inhibition. In terms of biological role, catalyzes the ATP-dependent amination of UTP to CTP with either L-glutamine or ammonia as the source of nitrogen. Regulates intracellular CTP levels through interactions with the four ribonucleotide triphosphates. The protein is CTP synthase of Burkholderia mallei (strain NCTC 10229).